The following is a 401-amino-acid chain: 4-hydroxy-3-methylbut-2-enyl diphosphate reductase (401 aa).

Residue cysteine 66 participates in [4Fe-4S] cluster binding. Histidine 96 is a (2E)-4-hydroxy-3-methylbut-2-enyl diphosphate binding site. Residue histidine 96 coordinates dimethylallyl diphosphate. Histidine 96 contacts isopentenyl diphosphate. Cysteine 157 is a binding site for [4Fe-4S] cluster. Histidine 185 contributes to the (2E)-4-hydroxy-3-methylbut-2-enyl diphosphate binding site. Histidine 185 contacts dimethylallyl diphosphate. Residue histidine 185 coordinates isopentenyl diphosphate. Glutamate 187 serves as the catalytic Proton donor. Threonine 250 serves as a coordination point for (2E)-4-hydroxy-3-methylbut-2-enyl diphosphate. Cysteine 288 provides a ligand contact to [4Fe-4S] cluster. (2E)-4-hydroxy-3-methylbut-2-enyl diphosphate contacts are provided by serine 317, serine 318, asparagine 319, and serine 381. 4 residues coordinate dimethylallyl diphosphate: serine 317, serine 318, asparagine 319, and serine 381. Isopentenyl diphosphate-binding residues include serine 317, serine 318, asparagine 319, and serine 381.

The protein belongs to the IspH family. The cofactor is [4Fe-4S] cluster.

It catalyses the reaction isopentenyl diphosphate + 2 oxidized [2Fe-2S]-[ferredoxin] + H2O = (2E)-4-hydroxy-3-methylbut-2-enyl diphosphate + 2 reduced [2Fe-2S]-[ferredoxin] + 2 H(+). The catalysed reaction is dimethylallyl diphosphate + 2 oxidized [2Fe-2S]-[ferredoxin] + H2O = (2E)-4-hydroxy-3-methylbut-2-enyl diphosphate + 2 reduced [2Fe-2S]-[ferredoxin] + 2 H(+). Its pathway is isoprenoid biosynthesis; dimethylallyl diphosphate biosynthesis; dimethylallyl diphosphate from (2E)-4-hydroxy-3-methylbutenyl diphosphate: step 1/1. It functions in the pathway isoprenoid biosynthesis; isopentenyl diphosphate biosynthesis via DXP pathway; isopentenyl diphosphate from 1-deoxy-D-xylulose 5-phosphate: step 6/6. Functionally, catalyzes the conversion of 1-hydroxy-2-methyl-2-(E)-butenyl 4-diphosphate (HMBPP) into a mixture of isopentenyl diphosphate (IPP) and dimethylallyl diphosphate (DMAPP). Acts in the terminal step of the DOXP/MEP pathway for isoprenoid precursor biosynthesis. The sequence is that of 4-hydroxy-3-methylbut-2-enyl diphosphate reductase from Prochlorococcus marinus (strain NATL1A).